The primary structure comprises 394 residues: Ornithine aminotransferase 1 (394 aa).

N6-(pyridoxal phosphate)lysine is present on Lys252.

This sequence belongs to the class-III pyridoxal-phosphate-dependent aminotransferase family. OAT subfamily. It depends on pyridoxal 5'-phosphate as a cofactor.

It localises to the cytoplasm. It catalyses the reaction a 2-oxocarboxylate + L-ornithine = L-glutamate 5-semialdehyde + an L-alpha-amino acid. It functions in the pathway amino-acid biosynthesis; L-proline biosynthesis; L-glutamate 5-semialdehyde from L-ornithine: step 1/1. Functionally, catalyzes the interconversion of ornithine to glutamate semialdehyde. The polypeptide is Ornithine aminotransferase 1 (Staphylococcus aureus (strain Mu50 / ATCC 700699)).